Here is a 441-residue protein sequence, read N- to C-terminus: Homoserine dehydrogenase (441 aa).

2 residues coordinate NADP(+): Asn-17 and Val-18. Val-18, Val-37, and Gly-47 together coordinate NAD(+). Position 18 (Val-18) interacts with NADPH. The NADP(+) site is built by Arg-49, Arg-50, and Lys-107. Arg-49 provides a ligand contact to NADPH. Residue Lys-107 coordinates NADPH. Residues Glu-131, Val-134, Gly-136, and Ile-138 each coordinate Na(+). Positions 189 and 192 each coordinate NADP(+). Positions 192 and 203 each coordinate L-homoserine. Lys-207 functions as the Proton donor in the catalytic mechanism. Gly-309 contributes to the NADP(+) binding site. Gly-309 is a binding site for NAD(+). Gly-309 contributes to the NADPH binding site. The 80-residue stretch at 356 to 435 (YVSMNVADKP…VVQGVSSVIR (80 aa)) folds into the ACT domain.

Belongs to the homoserine dehydrogenase family. A metal cation serves as cofactor.

It carries out the reaction L-homoserine + NADP(+) = L-aspartate 4-semialdehyde + NADPH + H(+). The catalysed reaction is L-homoserine + NAD(+) = L-aspartate 4-semialdehyde + NADH + H(+). Its pathway is amino-acid biosynthesis; L-methionine biosynthesis via de novo pathway; L-homoserine from L-aspartate: step 3/3. The protein operates within amino-acid biosynthesis; L-threonine biosynthesis; L-threonine from L-aspartate: step 3/5. Its function is as follows. Catalyzes the conversion of L-aspartate-beta-semialdehyde (L-Asa) to L-homoserine (L-Hse), the third step in the biosynthesis of threonine and methionine from aspartate. This Mycobacterium tuberculosis (strain CDC 1551 / Oshkosh) protein is Homoserine dehydrogenase (hom).